A 171-amino-acid polypeptide reads, in one-letter code: Lipoprotein signal peptidase (171 aa).

Helical transmembrane passes span 12-32 (LAWLWLSLLVLVIDQATKLYF), 42-62 (IVVIPDYFSWTLAYNTGAAFS), 70-90 (WQRWLFALIAVVVSAVLVVWL), and 96-116 (NETWLAVALALVLGGAIGNLY). Residues aspartate 126 and aspartate 145 contribute to the active site. The chain crosses the membrane as a helical span at residues 137 to 157 (YFPAFNVADSAITVGAVMLAL).

This sequence belongs to the peptidase A8 family.

The protein resides in the cell inner membrane. The catalysed reaction is Release of signal peptides from bacterial membrane prolipoproteins. Hydrolyzes -Xaa-Yaa-Zaa-|-(S,diacylglyceryl)Cys-, in which Xaa is hydrophobic (preferably Leu), and Yaa (Ala or Ser) and Zaa (Gly or Ala) have small, neutral side chains.. Its pathway is protein modification; lipoprotein biosynthesis (signal peptide cleavage). Functionally, this protein specifically catalyzes the removal of signal peptides from prolipoproteins. This Pseudomonas putida (strain ATCC 47054 / DSM 6125 / CFBP 8728 / NCIMB 11950 / KT2440) protein is Lipoprotein signal peptidase.